A 1342-amino-acid polypeptide reads, in one-letter code: DNA-directed RNA polymerase subunit beta (1342 aa).

This sequence belongs to the RNA polymerase beta chain family. As to quaternary structure, the RNAP catalytic core consists of 2 alpha, 1 beta, 1 beta' and 1 omega subunit. When a sigma factor is associated with the core the holoenzyme is formed, which can initiate transcription.

The enzyme catalyses RNA(n) + a ribonucleoside 5'-triphosphate = RNA(n+1) + diphosphate. Its function is as follows. DNA-dependent RNA polymerase catalyzes the transcription of DNA into RNA using the four ribonucleoside triphosphates as substrates. In Photorhabdus laumondii subsp. laumondii (strain DSM 15139 / CIP 105565 / TT01) (Photorhabdus luminescens subsp. laumondii), this protein is DNA-directed RNA polymerase subunit beta.